Consider the following 382-residue polypeptide: Mannitol-1-phosphate 5-dehydrogenase (382 aa).

Val-3–Gly-14 is a binding site for NAD(+).

It belongs to the mannitol dehydrogenase family.

The enzyme catalyses D-mannitol 1-phosphate + NAD(+) = beta-D-fructose 6-phosphate + NADH + H(+). This is Mannitol-1-phosphate 5-dehydrogenase from Sodalis glossinidius (strain morsitans).